Consider the following 206-residue polypeptide: Small ribosomal subunit protein uS4 (206 aa).

The S4 RNA-binding domain maps to Gly-96–Lys-156.

It belongs to the universal ribosomal protein uS4 family. As to quaternary structure, part of the 30S ribosomal subunit. Contacts protein S5. The interaction surface between S4 and S5 is involved in control of translational fidelity.

Its function is as follows. One of the primary rRNA binding proteins, it binds directly to 16S rRNA where it nucleates assembly of the body of the 30S subunit. With S5 and S12 plays an important role in translational accuracy. In Escherichia fergusonii (strain ATCC 35469 / DSM 13698 / CCUG 18766 / IAM 14443 / JCM 21226 / LMG 7866 / NBRC 102419 / NCTC 12128 / CDC 0568-73), this protein is Small ribosomal subunit protein uS4.